Consider the following 733-residue polypeptide: 1,4-alpha-glucan branching enzyme GlgB (733 aa).

D409 functions as the Nucleophile in the catalytic mechanism. Residue E462 is the Proton donor of the active site.

This sequence belongs to the glycosyl hydrolase 13 family. GlgB subfamily. As to quaternary structure, monomer.

The catalysed reaction is Transfers a segment of a (1-&gt;4)-alpha-D-glucan chain to a primary hydroxy group in a similar glucan chain.. Its pathway is glycan biosynthesis; glycogen biosynthesis. Its function is as follows. Catalyzes the formation of the alpha-1,6-glucosidic linkages in glycogen by scission of a 1,4-alpha-linked oligosaccharide from growing alpha-1,4-glucan chains and the subsequent attachment of the oligosaccharide to the alpha-1,6 position. The chain is 1,4-alpha-glucan branching enzyme GlgB from Gloeobacter violaceus (strain ATCC 29082 / PCC 7421).